The chain runs to 476 residues: Doublecortin domain-containing protein 2 (476 aa).

2 consecutive Doublecortin domains span residues 17–100 (KSVL…LNYL) and 139–221 (CTIF…LPYS). Residues 234 to 476 (FGQKASSLPP…QQNKDYAAVA (243 aa)) are disordered. The segment covering 261-272 (STVGSSDNSSPQ) has biased composition (polar residues). Serine 270 is modified (phosphoserine). Residues 279 to 289 (KKEDVNSEKLT) show a composition bias toward basic and acidic residues. Positions 296 to 306 (KLKNSQETIPN) are enriched in polar residues. Residues 354–366 (EKANKDAEQKEDF) show a composition bias toward basic and acidic residues. A compositionally biased stretch (low complexity) spans 415–426 (ELQQVNNELQLV). Over residues 446 to 455 (DPQRPPRPEV) the composition is skewed to basic and acidic residues.

As to quaternary structure, interacts with DVL1, DVL2 and DVL3. Ubiquitously expressed. In brain, highly expressed in the entorhinal cortex, inferior temporal cortex, medial temporal cortex, hypothalamus, amygdala and hippocampus. Expressed in liver by cholangiocytes, the epithelial cells of the bile ducts (at protein level).

It is found in the cell projection. Its subcellular location is the cilium. The protein localises to the cytoplasm. It localises to the cytoskeleton. The protein resides in the cilium axoneme. It is found in the kinocilium. In terms of biological role, protein that plays a role in the inhibition of canonical Wnt signaling pathway. May be involved in neuronal migration during development of the cerebral neocortex. Involved in the control of ciliogenesis and ciliary length. This chain is Doublecortin domain-containing protein 2 (DCDC2), found in Homo sapiens (Human).